We begin with the raw amino-acid sequence, 105 residues long: Large ribosomal subunit protein bL21 (105 aa).

It belongs to the bacterial ribosomal protein bL21 family. In terms of assembly, part of the 50S ribosomal subunit. Contacts protein L20.

Its function is as follows. This protein binds to 23S rRNA in the presence of protein L20. The chain is Large ribosomal subunit protein bL21 from Rickettsia prowazekii (strain Madrid E).